We begin with the raw amino-acid sequence, 311 residues long: Olfactory receptor-like protein OLF1 (311 aa).

Residues 1–24 (MDGNYTLVTEFILLGFPTRPELQI) are Extracellular-facing. A glycan (N-linked (GlcNAc...) asparagine) is linked at Asn-4. A helical transmembrane segment spans residues 25–48 (VLFLVFLTLYGIILTGNIGLMMLI). Topologically, residues 49-56 (RTDPHLQT) are cytoplasmic. The chain crosses the membrane as a helical span at residues 57–78 (PMYFFLSNLSFADLCFSSAIVP). Topologically, residues 79–99 (KMLVNFLSENKSISLYGCALQ) are extracellular. The chain crosses the membrane as a helical span at residues 100–119 (FYFSCAFADTESFILAAMAY). At 120 to 138 (DRYVAICNPLLYTVVMSRG) the chain is on the cytoplasmic side. The helical transmembrane segment at 139-157 (ICVWLIVLSYIGGNMSSLV) threads the bilayer. Topologically, residues 158-195 (HTSFAFILKYCDKNVINHFFCDLPPLLKLSCTDTSVNE) are extracellular. Residues 196 to 218 (WLLSTYGSSVEIFCFIVIVISYY) form a helical membrane-spanning segment. Residues 219 to 235 (FILRSVLRIRSSSGRKK) lie on the Cytoplasmic side of the membrane. The helical transmembrane segment at 236–259 (TFSTCASHLTSVAIYQGTLLFIYS) threads the bilayer. Over 260-271 (RPTYLYTPNTDK) the chain is Extracellular. Residues 272 to 291 (IISVFYTIIIPVLNPLIYSL) form a helical membrane-spanning segment. Residues 292–311 (RNKDVKDAAKRAVRLKVDSS) lie on the Cytoplasmic side of the membrane.

The protein belongs to the G-protein coupled receptor 1 family.

It localises to the cell membrane. Putative odorant or sperm cell receptor. The chain is Olfactory receptor-like protein OLF1 from Canis lupus familiaris (Dog).